A 654-amino-acid polypeptide reads, in one-letter code: MLKLLLPQHRTSVYLFKFQFFNFRFLSQSPSLSNSASSFSSSSLAEAILKCRSAEEAFKLFETSSRSRVSKSNDLQSFSAVIHVLTGAHKYTLARCLIKSLIERLKRHSEPSNMSHRLFNALEDIQSPKFSIGVFSLLIMEFLEMGLFEEALWVSREMKCSPDSKACLSILNGLVRRRRFDSVWVDYQLMISRGLVPDVHIYFVLFQCCFKQGLYSKKEKLLDEMTSLGIKPNVYIYTIYILDLCRDNKMEEAEKMFELMKKHGVLPNLYTYSAMIDGYCKTGNVRQAYGLYKEILVAELLPNVVVFGTLVDGFCKARELVTARSLFVHMVKFGVDPNLYVYNCLIHGHCKSGNMLEAVGLLSEMESLNLSPDVFTYTILINGLCIEDQVAEANRLFQKMKNERIFPSSATYNSLIHGYCKEYNMEQALDLCSEMTASGVEPNIITFSTLIDGYCNVRDIKAAMGLYFEMTIKGIVPDVVTYTALIDAHFKEANMKEALRLYSDMLEAGIHPNDHTFACLVDGFWKEGRLSVAIDFYQENNQQRSCWNHVGFTCLIEGLCQNGYILRASRFFSDMRSCGITPDICSYVSMLKGHLQEKRITDTMMLQCDMIKTGILPNLLVNQLLARFYQANGYVKSACFLTNSSRLKTVSNSC.

PPR repeat units lie at residues 37 to 71 (SSFSSSSLAEAILKCRSAEEAFKLFETSSRSRVSK), 74 to 104 (DLQSFSAVIHVLTGAHKYTLARCLIKSLIER), 131 to 161 (SIGVFSLLIMEFLEMGLFEEALWVSREMKCS), 163 to 197 (DSKACLSILNGLVRRRRFDSVWVDYQLMISRGLVP), 198 to 232 (DVHIYFVLFQCCFKQGLYSKKEKLLDEMTSLGIKP), 233 to 267 (NVYIYTIYILDLCRDNKMEEAEKMFELMKKHGVLP), 268 to 302 (NLYTYSAMIDGYCKTGNVRQAYGLYKEILVAELLP), 303 to 337 (NVVVFGTLVDGFCKARELVTARSLFVHMVKFGVDP), 338 to 372 (NLYVYNCLIHGHCKSGNMLEAVGLLSEMESLNLSP), 373 to 407 (DVFTYTILINGLCIEDQVAEANRLFQKMKNERIFP), 408 to 442 (SSATYNSLIHGYCKEYNMEQALDLCSEMTASGVEP), 443 to 477 (NIITFSTLIDGYCNVRDIKAAMGLYFEMTIKGIVP), 478 to 512 (DVVTYTALIDAHFKEANMKEALRLYSDMLEAGIHP), 513 to 543 (NDHTFACLVDGFWKEGRLSVAIDFYQENNQQ), 548 to 582 (NHVGFTCLIEGLCQNGYILRASRFFSDMRSCGITP), and 583 to 617 (DICSYVSMLKGHLQEKRITDTMMLQCDMIKTGILP).

This sequence belongs to the PPR family. P subfamily.

The protein is Pentatricopeptide repeat-containing protein At5g61400 of Arabidopsis thaliana (Mouse-ear cress).